The following is a 567-amino-acid chain: Phenylalanine--tRNA ligase beta subunit (567 aa).

The B5 domain maps to 284-359 (FAVRTKHVSH…RAYDFNDLTP (76 aa)). Mg(2+) contacts are provided by Asp337, Asp343, Asp346, and Asp347.

This sequence belongs to the phenylalanyl-tRNA synthetase beta subunit family. Type 2 subfamily. As to quaternary structure, tetramer of two alpha and two beta subunits. The cofactor is Mg(2+).

It localises to the cytoplasm. The catalysed reaction is tRNA(Phe) + L-phenylalanine + ATP = L-phenylalanyl-tRNA(Phe) + AMP + diphosphate + H(+). This Halobacterium salinarum (strain ATCC 29341 / DSM 671 / R1) protein is Phenylalanine--tRNA ligase beta subunit.